A 71-amino-acid polypeptide reads, in one-letter code: Small ribosomal subunit protein bS21 (71 aa).

Positions 48–59 (EKASLAKRHAKR) are enriched in basic residues. The disordered stretch occupies residues 48 to 71 (EKASLAKRHAKRNARENARNTRLY). Residues 60-71 (NARENARNTRLY) are compositionally biased toward basic and acidic residues.

The protein belongs to the bacterial ribosomal protein bS21 family.

This Actinobacillus pleuropneumoniae serotype 5b (strain L20) protein is Small ribosomal subunit protein bS21.